The primary structure comprises 265 residues: Neutrophil elastase (265 aa).

Positions 1–26 (MALGRLSSRTLAAMLLALFLGGPALA) are cleaved as a signal peptide. Residues 29 to 247 (IVGGRPARPH…FADWINSIIR (219 aa)) enclose the Peptidase S1 domain. A disulfide bond links Cys54 and Cys70. Active-site charge relay system residues include His69 and Asp116. N-linked (GlcNAc...) asparagine glycans are attached at residues Asn123 and Asn172. Disulfide bonds link Cys150–Cys208, Cys180–Cys187, and Cys198–Cys223. Catalysis depends on Ser202, which acts as the Charge relay system.

It belongs to the peptidase S1 family. Elastase subfamily. As to quaternary structure, interacts with NOTCH2NL.

The enzyme catalyses Hydrolysis of proteins, including elastin. Preferential cleavage: Val-|-Xaa &gt; Ala-|-Xaa.. Serine protease that modifies the functions of natural killer cells, monocytes and granulocytes. Inhibits C5a-dependent neutrophil enzyme release and chemotaxis. Promotes blood coagulation. Through the activation of the platelet fibrinogen receptor integrin alpha-IIb/beta-3, potentiates platelet aggregation induced by a threshold concentration of cathepsin G (CTSG). Cleaves and thus inactivates tissue factor pathway inhibitor (TFPI). Capable of killing E.coli; probably digests outer membrane protein A (ompA) in E.coli. In Mus musculus (Mouse), this protein is Neutrophil elastase (Elane).